Reading from the N-terminus, the 209-residue chain is Guanylate kinase (209 aa).

In terms of domain architecture, Guanylate kinase-like spans 7–185; that stretch reads GNLYIVAAPS…AAMELQSIVI (179 aa). 14–21 provides a ligand contact to ATP; that stretch reads APSGGGKT.

Belongs to the guanylate kinase family.

It localises to the cytoplasm. The catalysed reaction is GMP + ATP = GDP + ADP. Its function is as follows. Essential for recycling GMP and indirectly, cGMP. In Legionella pneumophila (strain Paris), this protein is Guanylate kinase.